Consider the following 352-residue polypeptide: S-adenosylmethionine:tRNA ribosyltransferase-isomerase (352 aa).

It belongs to the QueA family. Monomer.

The protein resides in the cytoplasm. It catalyses the reaction 7-aminomethyl-7-carbaguanosine(34) in tRNA + S-adenosyl-L-methionine = epoxyqueuosine(34) in tRNA + adenine + L-methionine + 2 H(+). The protein operates within tRNA modification; tRNA-queuosine biosynthesis. Its function is as follows. Transfers and isomerizes the ribose moiety from AdoMet to the 7-aminomethyl group of 7-deazaguanine (preQ1-tRNA) to give epoxyqueuosine (oQ-tRNA). The sequence is that of S-adenosylmethionine:tRNA ribosyltransferase-isomerase from Dechloromonas aromatica (strain RCB).